Consider the following 309-residue polypeptide: Protein FdhE homolog (309 aa).

Belongs to the FdhE family.

Its subcellular location is the cytoplasm. Necessary for formate dehydrogenase activity. The polypeptide is Protein FdhE homolog (Pseudomonas aeruginosa (strain ATCC 15692 / DSM 22644 / CIP 104116 / JCM 14847 / LMG 12228 / 1C / PRS 101 / PAO1)).